Consider the following 91-residue polypeptide: Acylphosphatase (91 aa).

The Acylphosphatase-like domain maps to Cys5 to Arg91. Catalysis depends on residues Arg20 and Asn38.

It belongs to the acylphosphatase family.

The enzyme catalyses an acyl phosphate + H2O = a carboxylate + phosphate + H(+). This Pseudomonas aeruginosa (strain ATCC 15692 / DSM 22644 / CIP 104116 / JCM 14847 / LMG 12228 / 1C / PRS 101 / PAO1) protein is Acylphosphatase (acyP).